A 437-amino-acid chain; its full sequence is Endoplasmic reticulum protein SC65 (437 aa).

The signal sequence occupies residues 1-18; sequence MARVAWGLLWLLLGSAGA. Asn361 carries an N-linked (GlcNAc...) asparagine glycan. Composition is skewed to acidic residues over residues 381-413 and 428-437; these read DEMELEETEPPLEPEDALSDAEFEGEGDYEEGM and AEAEPEPELA. The segment at 381–437 is disordered; the sequence is DEMELEETEPPLEPEDALSDAEFEGEGDYEEGMYADWWQEPDAKGDEAEAEPEPELA.

It belongs to the leprecan family. Interacts with PLOD1, P3H3 and PPIB. Identified in a complex with PLOD1 and P3H3. Detected in fibroblasts (at protein level). Detected in spleen, prostate, testis, ovary, colon, pancreas, kidney, placenta and heart.

The protein localises to the endoplasmic reticulum. Its function is as follows. Part of a complex composed of PLOD1, P3H3 and P3H4 that catalyzes hydroxylation of lysine residues in collagen alpha chains and is required for normal assembly and cross-linking of collagen fibrils. Required for normal bone density and normal skin stability via its role in hydroxylation of lysine residues in collagen alpha chains and in collagen fibril assembly. The chain is Endoplasmic reticulum protein SC65 from Homo sapiens (Human).